We begin with the raw amino-acid sequence, 201 residues long: Large ribosomal subunit protein uL4 (201 aa).

The interval 44 to 68 (RAQKSRADVSGSGRKPWRQKGTGRA) is disordered.

It belongs to the universal ribosomal protein uL4 family. Part of the 50S ribosomal subunit.

Its function is as follows. One of the primary rRNA binding proteins, this protein initially binds near the 5'-end of the 23S rRNA. It is important during the early stages of 50S assembly. It makes multiple contacts with different domains of the 23S rRNA in the assembled 50S subunit and ribosome. Forms part of the polypeptide exit tunnel. The protein is Large ribosomal subunit protein uL4 of Buchnera aphidicola subsp. Schizaphis graminum (strain Sg).